A 4239-amino-acid polypeptide reads, in one-letter code: Tenellin synthetase (4239 aa).

Residues 15–454 enclose the Ketosynthase family 3 (KS3) domain; the sequence is SEPIAIIGSA…GTNAHAIIER (440 aa). Catalysis depends on for beta-ketoacyl synthase activity residues cysteine 189, histidine 326, and histidine 374. Residues 589–923 are malonyl-CoA:ACP transacylase (MAT) domain; it reads VFTGQGAQWP…ANDAVAFSTA (335 aa). The tract at residues 993-1135 is N-terminal hotdog fold; sequence HELLGRRTPD…GRIAVQLGAK (143 aa). The interval 993 to 1310 is dehydratase (DH) domain; it reads HELLGRRTPD…GFEVRAVGEP (318 aa). In terms of domain architecture, PKS/mFAS DH spans 993–1313; the sequence is HELLGRRTPD…VRAVGEPDAS (321 aa). Histidine 1025 functions as the Proton acceptor; for dehydratase activity in the catalytic mechanism. The tract at residues 1158 to 1313 is C-terminal hotdog fold; it reads LQQLDCEKLY…VRAVGEPDAS (156 aa). Aspartate 1217 serves as the catalytic Proton donor; for dehydratase activity. The interval 1459 to 1652 is methyltransferase (MT) domain; that stretch reads RLYTEDKGMH…FSGVDHIVHD (194 aa). The tract at residues 2209–2382 is ketoreductase (KR) domain; the sequence is TYLMVGAAGG…AASIIHVGHV (174 aa). A Carrier 1 domain is found at 2502-2582; it reads EAAVAALKGF…QLSALAAKLA (81 aa). At serine 2542 the chain carries O-(pantetheine 4'-phosphoryl)serine. Disordered stretches follow at residues 2587-2629 and 2642-2712; these read KKRA…EIAQ and LEAS…FFTQ. Polar residues-rich tracts occupy residues 2648 to 2662 and 2670 to 2681; these read GGSS…SSVS and ESTLQSSDNNGE. Low complexity predominate over residues 2682 to 2698; that stretch reads STPSKSSNCNSDSGSDN. Positions 2723 to 3169 are condensation (C) domain; sequence REAPMSPAQS…SAQSVGDCVV (447 aa). Residues 3203-3614 form an adenylation (A) (KR) domain region; that stretch reads CQQHSTKSAI…DGTLLCFGRI (412 aa). A disordered region spans residues 3728-3752; the sequence is EAAAATSPSNNNINNNTPSGGGGEK. The segment covering 3729–3745 has biased composition (low complexity); the sequence is AAAATSPSNNNINNNTP. Residues 3751–3835 enclose the Carrier 2 domain; sequence EKMTVRQGEL…GMARCVAEQR (85 aa). The residue at position 3795 (serine 3795) is an O-(pantetheine 4'-phosphoryl)serine. Residues 3862–3892 are disordered; it reads EKLQHSSASSSSSSSSSSSAGSSSTQRPRKT. Residues 3867–3885 are compositionally biased toward low complexity; sequence SSASSSSSSSSSSSAGSSS. The tract at residues 3899–4145 is reductase (RED) domain; that stretch reads LTGATGFLGG…LDFGQVDKVV (247 aa).

In the C-terminal section; belongs to the NRP synthetase family.

The protein operates within secondary metabolite biosynthesis. Its function is as follows. Hybrid PKS-NRPS synthetase; part of the gene cluster that mediates the biosynthesis of tenellin-type 2-pyridones, iron-chelating compounds involved in iron stress tolerance, competition with the natural competitor fungus Metarhizium robertsii and insect hosts infection. TenS catalyzes the assembly of the polyketide-amino acid backbone. Because tenS lacks a designated enoylreductase (ER) domain, the required activity is provided the enoyl reductase tenC. Upon formation of the polyketide backbone on the thiotemplate, the triketide is transferred to the NRPS module and linked to tyrosine to produce the pyrrolidine-2-dione intermediates, including pretellinin A, 11-hydropretellenin A, 12-hydropretellenin A, 13-hydropretellenin A, 14-hydropretellenin A, 12-oxopretellenin A and prototellinin D. The pathway begins with the assembly of the polyketide-amino acid backbone by the hybrid PKS-NRPS tenS with the help of the enoyl reductase tenC. These enzymes catalyze the synthesis of the pyrrolidine-2-dione intermediates pretellinin A, 11-hydropretellenin A, 12-hydropretellenin A, 13-hydropretellenin A, 14-hydropretellenin A, 12-oxopretellenin A and prototellinin D. The cytochrome P450 monooxygenase tenA then catalyzes an oxidative ring expansion of pretenellin A and 14-hydropretellenin A to form the 2-pyridone core, leading to pretenellin B and pyridovericin, respectively. The cytochrome P450 monooxygenase tenB is then required for the selective N-hydroxylation of the 2-pyridone nitrogen of yield tellinin and 15-hydroxytellenin (15-HT), respectively. The UDP-glucosyltransferase GT1 and the methyltransferase MT1, located outside the tenS gene cluster, contribute to the stepwise glycosylation and methylation of 15-HT to obtain the glycoside pyridovericin-N-O-(4-O-methyl-beta-D-glucopyranoside) (PMGP). Additional related compounds such as 1-O-methyl-15-HT, (8Z)-1-O-methyl-15-HT, and O-methyltenellin A are also produced but the enzymes involved in their biosynthesis have still to be determined. The protein is Tenellin synthetase of Beauveria bassiana (White muscardine disease fungus).